A 123-amino-acid chain; its full sequence is Large ribosomal subunit protein bL12 (123 aa).

Belongs to the bacterial ribosomal protein bL12 family. Homodimer. Part of the ribosomal stalk of the 50S ribosomal subunit. Forms a multimeric L10(L12)X complex, where L10 forms an elongated spine to which 2 to 4 L12 dimers bind in a sequential fashion. Binds GTP-bound translation factors.

In terms of biological role, forms part of the ribosomal stalk which helps the ribosome interact with GTP-bound translation factors. Is thus essential for accurate translation. This chain is Large ribosomal subunit protein bL12, found in Rhodospirillum rubrum (strain ATCC 11170 / ATH 1.1.1 / DSM 467 / LMG 4362 / NCIMB 8255 / S1).